Reading from the N-terminus, the 848-residue chain is Probable serine/threonine-protein kinase DDB_G0278535 (848 aa).

Low complexity-rich tracts occupy residues 1-52 (MNKS…NNNH), 60-85 (TAAT…TSST), and 95-116 (TSNS…VSTS). The tract at residues 1–117 (MNKSSSASTV…SSSPQVSTSV (117 aa)) is disordered. ANK repeat units lie at residues 181–212 (MDQT…KMDI), 218–248 (SGYT…NVNI), 252–285 (DKNS…NVNA), 289–320 (NGET…EVNV), and 324–353 (RGES…DITI). One can recognise an SAM domain in the interval 378–441 (KNVQDIFNWL…IRNCRILRDQ (64 aa)). Residues 448 to 478 (NSNVTTGSGSSGSTTTTTTTTTTTSGCGGLN) form a disordered region. A compositionally biased stretch (low complexity) spans 452-472 (TTGSGSSGSTTTTTTTTTTTS). One can recognise a Protein kinase domain in the interval 529–799 (LEYTLKLGSG…TLNRLRHEYM (271 aa)). ATP-binding positions include 535–543 (LGSGSSGKV) and K556. D650 acts as the Proton acceptor in catalysis. The interval 810 to 848 (RKLPSLSPPPQPTTTTTTTTSSSTSTNNINNNINNNNNT) is disordered. Over residues 822–848 (TTTTTTTTSSSTSTNNINNNINNNNNT) the composition is skewed to low complexity.

Belongs to the protein kinase superfamily. TKL Ser/Thr protein kinase family.

It carries out the reaction L-seryl-[protein] + ATP = O-phospho-L-seryl-[protein] + ADP + H(+). It catalyses the reaction L-threonyl-[protein] + ATP = O-phospho-L-threonyl-[protein] + ADP + H(+). The sequence is that of Probable serine/threonine-protein kinase DDB_G0278535 from Dictyostelium discoideum (Social amoeba).